A 386-amino-acid polypeptide reads, in one-letter code: DNA-directed RNA polymerase subunit Rpo1C (386 aa).

The protein belongs to the RNA polymerase beta' chain family. In terms of assembly, part of the RNA polymerase complex.

The protein resides in the cytoplasm. It carries out the reaction RNA(n) + a ribonucleoside 5'-triphosphate = RNA(n+1) + diphosphate. Functionally, DNA-dependent RNA polymerase (RNAP) catalyzes the transcription of DNA into RNA using the four ribonucleoside triphosphates as substrates. Forms part of the jaw domain. This Methanococcus vannielii (strain ATCC 35089 / DSM 1224 / JCM 13029 / OCM 148 / SB) protein is DNA-directed RNA polymerase subunit Rpo1C.